The sequence spans 235 residues: Interleukin-34 (235 aa).

Residues 1–20 (MPWGLAWLYCLGILLDVALG) form the signal peptide. An N-linked (GlcNAc...) asparagine glycan is attached at Asn100.

It belongs to the IL-34 family. Homodimer. Interacts with CSF1R.

It is found in the secreted. Functionally, cytokine that promotes the proliferation, survival and differentiation of monocytes and macrophages. Promotes the release of pro-inflammatory chemokines, and thereby plays an important role in innate immunity and in inflammatory processes. Plays an important role in the regulation of osteoclast proliferation and differentiation, and in the regulation of bone resorption. Signaling via CSF1R and its downstream effectors stimulates phosphorylation of MAPK1/ERK2 AND MAPK3/ERK1. This is Interleukin-34 (Il34) from Mus musculus (Mouse).